The following is a 237-amino-acid chain: LexA repressor (237 aa).

Residues 26 to 46 (FDEMKDALDLRSKSGIHRLIT) constitute a DNA-binding region (H-T-H motif). Active-site for autocatalytic cleavage activity residues include serine 158 and lysine 196.

The protein belongs to the peptidase S24 family. In terms of assembly, homodimer.

It catalyses the reaction Hydrolysis of Ala-|-Gly bond in repressor LexA.. In terms of biological role, represses a number of genes involved in the response to DNA damage (SOS response), including recA and lexA. In the presence of single-stranded DNA, RecA interacts with LexA causing an autocatalytic cleavage which disrupts the DNA-binding part of LexA, leading to derepression of the SOS regulon and eventually DNA repair. This is LexA repressor from Rhodopseudomonas palustris (strain BisA53).